The sequence spans 214 residues: Phosphoenolpyruvate guanylyltransferase (214 aa).

3 residues coordinate phosphoenolpyruvate: Thr-148, Gly-163, and Ser-166.

This sequence belongs to the CofC family.

The enzyme catalyses phosphoenolpyruvate + GTP + H(+) = enolpyruvoyl-2-diphospho-5'-guanosine + diphosphate. It participates in cofactor biosynthesis; coenzyme F420 biosynthesis. In terms of biological role, guanylyltransferase that catalyzes the activation of phosphoenolpyruvate (PEP) as enolpyruvoyl-2-diphospho-5'-guanosine, via the condensation of PEP with GTP. It is involved in the biosynthesis of coenzyme F420, a hydride carrier cofactor. The polypeptide is Phosphoenolpyruvate guanylyltransferase (Mycobacterium tuberculosis (strain KZN 1435 / MDR)).